A 415-amino-acid chain; its full sequence is Gamma-glutamyl phosphate reductase 1 (415 aa).

This sequence belongs to the gamma-glutamyl phosphate reductase family.

The protein localises to the cytoplasm. It catalyses the reaction L-glutamate 5-semialdehyde + phosphate + NADP(+) = L-glutamyl 5-phosphate + NADPH + H(+). It functions in the pathway amino-acid biosynthesis; L-proline biosynthesis; L-glutamate 5-semialdehyde from L-glutamate: step 2/2. Functionally, catalyzes the NADPH-dependent reduction of L-glutamate 5-phosphate into L-glutamate 5-semialdehyde and phosphate. The product spontaneously undergoes cyclization to form 1-pyrroline-5-carboxylate. The protein is Gamma-glutamyl phosphate reductase 1 of Bacillus licheniformis (strain ATCC 14580 / DSM 13 / JCM 2505 / CCUG 7422 / NBRC 12200 / NCIMB 9375 / NCTC 10341 / NRRL NRS-1264 / Gibson 46).